Reading from the N-terminus, the 378-residue chain is Holliday junction branch migration complex subunit RuvB 1 (378 aa).

The span at 1–12 (MAIISSRDTGQN) shows a compositional bias: polar residues. A disordered region spans residues 1 to 62 (MAIISSRDTG…PGEAQEESLR (62 aa)). The segment at 13 to 222 (AEGPKRRQQK…FGHVQRLRFY (210 aa)) is large ATPase domain (RuvB-L). ATP is bound by residues leucine 61, arginine 62, glycine 103, lysine 106, threonine 107, threonine 108, 169–171 (EDF), arginine 212, tyrosine 222, and arginine 259. Threonine 107 is a binding site for Mg(2+). The tract at residues 223-293 (EPHELVQIVL…VAAAALELFQ (71 aa)) is small ATPAse domain (RuvB-S). The head domain (RuvB-H) stretch occupies residues 296 to 378 (PMGLDWIDRK…EAQSPLPLWS (83 aa)). Positions 351 and 356 each coordinate DNA.

This sequence belongs to the RuvB family. As to quaternary structure, homohexamer. Forms an RuvA(8)-RuvB(12)-Holliday junction (HJ) complex. HJ DNA is sandwiched between 2 RuvA tetramers; dsDNA enters through RuvA and exits via RuvB. An RuvB hexamer assembles on each DNA strand where it exits the tetramer. Each RuvB hexamer is contacted by two RuvA subunits (via domain III) on 2 adjacent RuvB subunits; this complex drives branch migration. In the full resolvosome a probable DNA-RuvA(4)-RuvB(12)-RuvC(2) complex forms which resolves the HJ.

It localises to the cytoplasm. The catalysed reaction is ATP + H2O = ADP + phosphate + H(+). In terms of biological role, the RuvA-RuvB-RuvC complex processes Holliday junction (HJ) DNA during genetic recombination and DNA repair, while the RuvA-RuvB complex plays an important role in the rescue of blocked DNA replication forks via replication fork reversal (RFR). RuvA specifically binds to HJ cruciform DNA, conferring on it an open structure. The RuvB hexamer acts as an ATP-dependent pump, pulling dsDNA into and through the RuvAB complex. RuvB forms 2 homohexamers on either side of HJ DNA bound by 1 or 2 RuvA tetramers; 4 subunits per hexamer contact DNA at a time. Coordinated motions by a converter formed by DNA-disengaged RuvB subunits stimulates ATP hydrolysis and nucleotide exchange. Immobilization of the converter enables RuvB to convert the ATP-contained energy into a lever motion, pulling 2 nucleotides of DNA out of the RuvA tetramer per ATP hydrolyzed, thus driving DNA branch migration. The RuvB motors rotate together with the DNA substrate, which together with the progressing nucleotide cycle form the mechanistic basis for DNA recombination by continuous HJ branch migration. Branch migration allows RuvC to scan DNA until it finds its consensus sequence, where it cleaves and resolves cruciform DNA. The polypeptide is Holliday junction branch migration complex subunit RuvB 1 (Synechococcus sp. (strain JA-3-3Ab) (Cyanobacteria bacterium Yellowstone A-Prime)).